The following is a 67-amino-acid chain: UPF0181 protein KPK_1966 (67 aa).

Residues 48–67 (EQIVARFEDEDEDQDEDEDD) form a disordered region. Over residues 55 to 67 (EDEDEDQDEDEDD) the composition is skewed to acidic residues.

The protein belongs to the UPF0181 family.

This chain is UPF0181 protein KPK_1966, found in Klebsiella pneumoniae (strain 342).